The sequence spans 377 residues: Transmembrane 6 superfamily member 2 (377 aa).

9 consecutive transmembrane segments (helical) span residues 10–30 (IAAL…VSAL), 34–54 (LWVA…VYSL), 63–83 (PLYA…IIAL), 111–131 (FICY…AGAI), 140–160 (FGLY…TGNI), 170–190 (PAFF…MKVF), 219–239 (LALV…GLVV), 269–289 (MLMY…ALTF), and 332–352 (TWGC…LLAY). EXPERA domains lie at 61–186 (YDPL…CWAG) and 217–351 (ADLA…HLLA).

This sequence belongs to the TM6SF family. Substantial expression in liver and intestine, whereas all other tissues analyzed show low levels.

The protein localises to the endoplasmic reticulum membrane. It localises to the endoplasmic reticulum-Golgi intermediate compartment membrane. Functionally, regulator of liver fat metabolism influencing triglyceride secretion and hepatic lipid droplet content. May function as sterol isomerase. This chain is Transmembrane 6 superfamily member 2 (TM6SF2), found in Homo sapiens (Human).